The sequence spans 132 residues: Small ribosomal subunit protein uS8 (132 aa).

Belongs to the universal ribosomal protein uS8 family. Part of the 30S ribosomal subunit. Contacts proteins S5 and S12.

One of the primary rRNA binding proteins, it binds directly to 16S rRNA central domain where it helps coordinate assembly of the platform of the 30S subunit. This Streptomyces coelicolor (strain ATCC BAA-471 / A3(2) / M145) protein is Small ribosomal subunit protein uS8.